The sequence spans 186 residues: ADP-ribosylation factor-like protein 8 (186 aa).

Positions methionine 1–glutamate 19 form an intramembrane region, note=Mediates targeting to membranes. GTP-binding positions include glutamine 29–threonine 35, aspartate 71–glutamine 75, and asparagine 130–aspartate 133.

It belongs to the small GTPase superfamily. Arf family. In terms of assembly, interacts with tubulin. Interacts (in GTP-bound form) with Rilpl. Interacts with unc-104. Expressed throughout development, from embryo to adult stage, in different tissues such as larval motor neurons, salivary glands, testis and ovaries (at protein level).

The protein resides in the lysosome membrane. Its subcellular location is the synapse. The protein localises to the cell projection. It localises to the axon. It is found in the perikaryon. In terms of biological role, required for normal functioning of the late endocytic pathway including lysosome motility and late endosome-lysosome fusion. Not required for the delivery of lysosomal membrane protein-containing vesicles to late endosomes. In larval motor neurons, mediates the anterograde axonal long-range transport of presynaptic lysosome-related vesicles required for presynaptic biogenesis and synaptic function. Acts downstream of Rab2 during presynaptic precursor vesicle biogenesis. Essential role in chromosome segregation. In Drosophila melanogaster (Fruit fly), this protein is ADP-ribosylation factor-like protein 8.